The chain runs to 550 residues: Solute carrier family 22 member 6 (550 aa).

The Cytoplasmic portion of the chain corresponds to 1–9 (MAFNDLLQQ). Residues 10–30 (VGGVGRFQQIQVTLVVLPLLL) traverse the membrane as a helical segment. Topologically, residues 31–135 (MASHNTVQNF…LVCSHRALRQ (105 aa)) are extracellular. N-linked (GlcNAc...) asparagine glycans are attached at residues Asn-56, Asn-92, and Asn-113. Residues 136–156 (LAQSLYMVGVLLGAMVFGYLA) traverse the membrane as a helical segment. Topologically, residues 157-164 (DRLGRRKV) are cytoplasmic. A helical membrane pass occupies residues 165–187 (LILNYLQTAVSGTCAAFAPNFPI). Residues 188-190 (YCA) are Extracellular-facing. Residues 191-213 (FRLLSGMSLAGIALNCMTLNVEW) traverse the membrane as a helical segment. Topologically, residues 214 to 224 (MPIHTRACVGT) are cytoplasmic. A helical membrane pass occupies residues 225 to 245 (LIGYVYSLGQFLLAGVAYAVP). Over 246 to 248 (HWR) the chain is Extracellular. Residues 249-269 (HLQLLISVPFFAFFIYSWFFI) traverse the membrane as a helical segment. Residues 270–337 (ESARWHSSSG…ELLRCPTLRH (68 aa)) lie on the Cytoplasmic side of the membrane. Residues 338-358 (LFLCLSMLWFATSFAYYGLVM) traverse the membrane as a helical segment. The Extracellular segment spans residues 359-368 (DLQGFGVSIY). Residues 369–389 (LIQVIFGAVDLPAKLVGFLVI) traverse the membrane as a helical segment. At 390–395 (NSLGRR) the chain is on the cytoplasmic side. Residues 396 to 416 (PAQMAALLLAGICILLNGVVP) traverse the membrane as a helical segment. Topologically, residues 417-425 (QDQSVIRTS) are extracellular. A helical transmembrane segment spans residues 426-446 (LAVLGKGCLAASFNCIFLYTG). The Cytoplasmic portion of the chain corresponds to 447–456 (ELYPTMIRQT). The chain crosses the membrane as a helical span at residues 457–477 (GLGMGSTMARVGSIVSPLVSM). The Extracellular portion of the chain corresponds to 478–484 (TTELYPS). The helical transmembrane segment at 485–505 (VPLFIYGAVPVAASAVTVLLP) threads the bilayer. At 506-550 (ETLGQPLPDTVQDLESRKGKQTPQQQEHQKYMVPLQASAQEKNGL) the chain is on the cytoplasmic side. A disordered region spans residues 513 to 550 (PDTVQDLESRKGKQTPQQQEHQKYMVPLQASAQEKNGL).

The protein belongs to the major facilitator (TC 2.A.1) superfamily. Organic cation transporter (TC 2.A.1.19) family. Glycosylated. Glycosylation is necessary for proper targeting of the transporter to the plasma membrane. As to expression, expressed in kidney; in the basolateral membrane of the proximal tubule.

It is found in the basolateral cell membrane. The protein resides in the basal cell membrane. It catalyses the reaction (6R)-L-erythro-5,6,7,8-tetrahydrobiopterin(out) + a dicarboxylate(in) = (6R)-L-erythro-5,6,7,8-tetrahydrobiopterin(in) + a dicarboxylate(out). The catalysed reaction is L-erythro-7,8-dihydrobiopterin(out) + a dicarboxylate(in) = L-erythro-7,8-dihydrobiopterin(in) + a dicarboxylate(out). The enzyme catalyses L-sepiapterin(out) + a dicarboxylate(in) = L-sepiapterin(in) + a dicarboxylate(out). It carries out the reaction prostaglandin F2alpha(out) + a dicarboxylate(in) = prostaglandin F2alpha(in) + a dicarboxylate(out). It catalyses the reaction prostaglandin E2(out) + a dicarboxylate(in) = prostaglandin E2(in) + a dicarboxylate(out). The catalysed reaction is 3',5'-cyclic AMP(out) + a dicarboxylate(in) = 3',5'-cyclic AMP(in) + a dicarboxylate(out). The enzyme catalyses 3',5'-cyclic GMP(out) + a dicarboxylate(in) = 3',5'-cyclic GMP(in) + a dicarboxylate(out). It carries out the reaction urate(out) + a dicarboxylate(in) = urate(in) + a dicarboxylate(out). It catalyses the reaction kynurenate(out) + glutarate(in) = kynurenate(in) + glutarate(out). The catalysed reaction is (indol-3-yl)acetate(out) + a dicarboxylate(in) = (indol-3-yl)acetate(in) + a dicarboxylate(out). The enzyme catalyses indoxyl sulfate(out) + a dicarboxylate(in) = indoxyl sulfate(in) + a dicarboxylate(out). It carries out the reaction N-benzoylglycine(out) + a dicarboxylate(in) = N-benzoylglycine(in) + a dicarboxylate(out). It catalyses the reaction 3-carboxy-4-methyl-5-propyl-2-furanpropanoate(out) + a dicarboxylate(in) = 3-carboxy-4-methyl-5-propyl-2-furanpropanoate(in) + a dicarboxylate(out). Secondary active transporter that functions as a Na(+)-independent organic anion (OA)/dicarboxylate antiporter where the uptake of one molecule of OA into the cell is coupled with an efflux of one molecule of intracellular dicarboxylate such as 2-oxoglutarate or glutarate. Mediates the uptake of OA across the basolateral side of proximal tubule epithelial cells, thereby contributing to the renal elimination of endogenous OA from the systemic circulation into the urine. Functions as a biopterin transporters involved in the uptake and the secretion of coenzymes tetrahydrobiopterin (BH4), dihydrobiopterin (BH2) and sepiapterin to urine, thereby determining baseline levels of blood biopterins. Transports prostaglandin E2 (PGE2) and prostaglandin F2-alpha (PGF2-alpha) and may contribute to their renal excretion. Also mediates the uptake of cyclic nucleotides such as cAMP and cGMP. Involved in the transport of neuroactive tryptophan metabolites kynurenate (KYNA) and xanthurenate (XA) and may contribute to their secretion from the brain. May transport glutamate. Also involved in the disposition of uremic toxins and potentially toxic xenobiotics by the renal organic anion secretory pathway, helping reduce their undesired toxicological effects on the body. Uremic toxins include the indoxyl sulfate (IS), hippurate/N-benzoylglycine (HA), indole acetate (IA), 3-carboxy-4- methyl-5-propyl-2-furanpropionate (CMPF) and urate. Xenobiotics include the mycotoxin ochratoxin (OTA). May also contribute to the transport of organic compounds in testes across the blood-testis-barrier. In Macaca fascicularis (Crab-eating macaque), this protein is Solute carrier family 22 member 6.